Here is a 335-residue protein sequence, read N- to C-terminus: Probable cytosolic iron-sulfur protein assembly protein Ciao1 (335 aa).

WD repeat units lie at residues Gly-12–Lys-51, Gly-57–Asn-96, Gly-101–Cys-140, Pro-146–Asp-185, Ser-192–Gly-231, Gln-250–Glu-289, and Ala-301–Glu-335.

Belongs to the WD repeat CIA1 family. Conjugated to URM1, a ubiquitin-like protein.

In terms of biological role, essential component of the cytosolic iron-sulfur (Fe/S) protein assembly machinery. Required for the maturation of extramitochondrial Fe/S proteins. This is Probable cytosolic iron-sulfur protein assembly protein Ciao1 from Drosophila melanogaster (Fruit fly).